Here is a 262-residue protein sequence, read N- to C-terminus: Glutamate racemase (262 aa).

Substrate contacts are provided by residues 10 to 11 (DS) and 42 to 43 (FG). Catalysis depends on cysteine 74, which acts as the Proton donor/acceptor. Substrate is bound at residue 75 to 76 (NT). Cysteine 189 serves as the catalytic Proton donor/acceptor. Residue 190-191 (TH) participates in substrate binding.

It belongs to the aspartate/glutamate racemases family.

The catalysed reaction is L-glutamate = D-glutamate. The protein operates within cell wall biogenesis; peptidoglycan biosynthesis. In terms of biological role, provides the (R)-glutamate required for cell wall biosynthesis. This is Glutamate racemase from Mesorhizobium japonicum (strain LMG 29417 / CECT 9101 / MAFF 303099) (Mesorhizobium loti (strain MAFF 303099)).